Consider the following 289-residue polypeptide: Lipoyl synthase 2 (289 aa).

The [4Fe-4S] cluster site is built by Cys-43, Cys-48, Cys-54, Cys-69, Cys-73, Cys-76, and Ser-282. The region spanning 55-271 is the Radical SAM core domain; the sequence is YAQKTATFLL…GAVARDLGFA (217 aa).

It belongs to the radical SAM superfamily. Lipoyl synthase family. [4Fe-4S] cluster serves as cofactor.

The protein resides in the cytoplasm. It carries out the reaction [[Fe-S] cluster scaffold protein carrying a second [4Fe-4S](2+) cluster] + N(6)-octanoyl-L-lysyl-[protein] + 2 oxidized [2Fe-2S]-[ferredoxin] + 2 S-adenosyl-L-methionine + 4 H(+) = [[Fe-S] cluster scaffold protein] + N(6)-[(R)-dihydrolipoyl]-L-lysyl-[protein] + 4 Fe(3+) + 2 hydrogen sulfide + 2 5'-deoxyadenosine + 2 L-methionine + 2 reduced [2Fe-2S]-[ferredoxin]. The protein operates within protein modification; protein lipoylation via endogenous pathway; protein N(6)-(lipoyl)lysine from octanoyl-[acyl-carrier-protein]: step 2/2. In terms of biological role, catalyzes the radical-mediated insertion of two sulfur atoms into the C-6 and C-8 positions of the octanoyl moiety bound to the lipoyl domains of lipoate-dependent enzymes, thereby converting the octanoylated domains into lipoylated derivatives. This chain is Lipoyl synthase 2, found in Gloeobacter violaceus (strain ATCC 29082 / PCC 7421).